We begin with the raw amino-acid sequence, 529 residues long: DnaJ homolog l(2)tid, mitochondrial (529 aa).

Residues 1-22 (MISCKNLCVLRQLPLKNCRRHY) constitute a mitochondrion transit peptide. Arginine 35 bears the Omega-N-methylarginine mark. In terms of domain architecture, J spans 80–145 (DYYATLGVAK…QKRREYDTYG (66 aa)). Lysine 121 carries the post-translational modification N6-acetyllysine. Residues 230-308 (GVNKDVNVNV…CEGKGQTVQR (79 aa)) form a CR-type zinc finger. The Zn(2+) site is built by cysteine 243, cysteine 246, cysteine 260, cysteine 263, cysteine 282, cysteine 285, cysteine 296, and cysteine 299. The CXXCXGXG motif; approximate repeat unit spans residues 243 to 250 (CPKCAGSK). The CXXCXGXG motif repeat unit spans residues 260-267 (CQYCNGTG). Residues 282-289 (CRYCQGTR) form a CXXCXGXG motif; approximate repeat. One copy of the CXXCXGXG motif repeat lies at 296-303 (CAECEGKG). The segment at 441–529 (TPGQIHGMAQ…FLNKIKSMFN (89 aa)) is disordered. Over residues 497-508 (QSEKSETRRKDQ) the composition is skewed to basic and acidic residues.

It is found in the mitochondrion outer membrane. May act as a tumor suppressor in larval imaginal disks. The chain is DnaJ homolog l(2)tid, mitochondrial (l(2)tid) from Drosophila virilis (Fruit fly).